We begin with the raw amino-acid sequence, 155 residues long: D-aminoacyl-tRNA deacylase (155 aa).

The short motif at 137–138 (GP) is the Gly-cisPro motif, important for rejection of L-amino acids element.

Belongs to the DTD family. As to quaternary structure, homodimer.

The protein resides in the cytoplasm. It catalyses the reaction glycyl-tRNA(Ala) + H2O = tRNA(Ala) + glycine + H(+). The catalysed reaction is a D-aminoacyl-tRNA + H2O = a tRNA + a D-alpha-amino acid + H(+). Its function is as follows. An aminoacyl-tRNA editing enzyme that deacylates mischarged D-aminoacyl-tRNAs. Also deacylates mischarged glycyl-tRNA(Ala), protecting cells against glycine mischarging by AlaRS. Acts via tRNA-based rather than protein-based catalysis; rejects L-amino acids rather than detecting D-amino acids in the active site. By recycling D-aminoacyl-tRNA to D-amino acids and free tRNA molecules, this enzyme counteracts the toxicity associated with the formation of D-aminoacyl-tRNA entities in vivo and helps enforce protein L-homochirality. The chain is D-aminoacyl-tRNA deacylase from Geotalea uraniireducens (strain Rf4) (Geobacter uraniireducens).